We begin with the raw amino-acid sequence, 91 residues long: Small ribosomal subunit protein uS19 (91 aa).

This sequence belongs to the universal ribosomal protein uS19 family.

Its function is as follows. Protein S19 forms a complex with S13 that binds strongly to the 16S ribosomal RNA. In Syntrophotalea carbinolica (strain DSM 2380 / NBRC 103641 / GraBd1) (Pelobacter carbinolicus), this protein is Small ribosomal subunit protein uS19.